The primary structure comprises 383 residues: Lipoyl synthase, mitochondrial (383 aa).

The N-terminal 19 residues, 1–19, are a transit peptide targeting the mitochondrion; the sequence is MHASTLTRCMRVAQNARCL. The interval 69-97 is disordered; the sequence is DAAPGTKPSRKPNASNRKPKWLKAQPTQG. [4Fe-4S] cluster is bound by residues cysteine 116, cysteine 121, cysteine 127, cysteine 147, cysteine 151, cysteine 154, and serine 362. Positions 132-351 constitute a Radical SAM core domain; it reads KDGIATATIM…QKVAEQMGFL (220 aa).

The protein belongs to the radical SAM superfamily. Lipoyl synthase family. [4Fe-4S] cluster is required as a cofactor.

It is found in the mitochondrion. It carries out the reaction [[Fe-S] cluster scaffold protein carrying a second [4Fe-4S](2+) cluster] + N(6)-octanoyl-L-lysyl-[protein] + 2 oxidized [2Fe-2S]-[ferredoxin] + 2 S-adenosyl-L-methionine + 4 H(+) = [[Fe-S] cluster scaffold protein] + N(6)-[(R)-dihydrolipoyl]-L-lysyl-[protein] + 4 Fe(3+) + 2 hydrogen sulfide + 2 5'-deoxyadenosine + 2 L-methionine + 2 reduced [2Fe-2S]-[ferredoxin]. Its pathway is protein modification; protein lipoylation via endogenous pathway; protein N(6)-(lipoyl)lysine from octanoyl-[acyl-carrier-protein]: step 2/2. Catalyzes the radical-mediated insertion of two sulfur atoms into the C-6 and C-8 positions of the octanoyl moiety bound to the lipoyl domains of lipoate-dependent enzymes, thereby converting the octanoylated domains into lipoylated derivatives. This is Lipoyl synthase, mitochondrial from Phytophthora infestans (strain T30-4) (Potato late blight agent).